We begin with the raw amino-acid sequence, 128 residues long: Aspartate 1-decarboxylase (128 aa).

Ser25 (schiff-base intermediate with substrate; via pyruvic acid) is an active-site residue. Pyruvic acid (Ser) is present on Ser25. Thr57 provides a ligand contact to substrate. Tyr58 acts as the Proton donor in catalysis. 73–75 serves as a coordination point for substrate; that stretch reads GSA.

The protein belongs to the PanD family. Heterooctamer of four alpha and four beta subunits. Pyruvate serves as cofactor. Post-translationally, is synthesized initially as an inactive proenzyme, which is activated by self-cleavage at a specific serine bond to produce a beta-subunit with a hydroxyl group at its C-terminus and an alpha-subunit with a pyruvoyl group at its N-terminus.

The protein resides in the cytoplasm. It catalyses the reaction L-aspartate + H(+) = beta-alanine + CO2. It functions in the pathway cofactor biosynthesis; (R)-pantothenate biosynthesis; beta-alanine from L-aspartate: step 1/1. In terms of biological role, catalyzes the pyruvoyl-dependent decarboxylation of aspartate to produce beta-alanine. In Burkholderia multivorans (strain ATCC 17616 / 249), this protein is Aspartate 1-decarboxylase.